The following is a 71-amino-acid chain: Keratin-associated protein 6-1 (71 aa).

Belongs to the KRTAP type 6 family. As to quaternary structure, interacts with hair keratins.

Its function is as follows. In the hair cortex, hair keratin intermediate filaments are embedded in an interfilamentous matrix, consisting of hair keratin-associated proteins (KRTAP), which are essential for the formation of a rigid and resistant hair shaft through their extensive disulfide bond cross-linking with abundant cysteine residues of hair keratins. The matrix proteins include the high-sulfur and high-glycine-tyrosine keratins. The chain is Keratin-associated protein 6-1 (KRTAP6-1) from Homo sapiens (Human).